We begin with the raw amino-acid sequence, 462 residues long: MEKAIQRQRVLLEHLQPIRHHTHDHSSSLTTSICAAGDSAAYQRTAAFGDDVVIVAAYRTAICKSKRGGFKDTLSDDLLAPVLKAVIEKTNLDPKEVGDIVVGTVLAPGSIRAMECRMAAFYAGFPETVPIRTVNRQCSSGLQAVADVAASIKAGFYDIGIGAGLELMTVDNIGRVQQRNTKVDTFAQARDCLLPMGITSENVAQRFGVTRLEQDQAAVNSHQRAAAATASGKFKDEIIPVLTKIVDPQTGKEKPVVISVDDGIRPNTNLTSLGKLKPAFKNDGTTTAGNASQVSDGAAAVLLMKRSVAMKKGLPILGVFRSFAAVGVDPAVMGIGPAVAIPPAVKSAGLDLDDIDLYEINEAFASQFVYCQKKLNLDPEKVNVNGGAMALGHPLGATGARCVATLLHEMKRRGKDCRFGVISMCIGSGMGAAAVFERGDAVDDLCNARVSNNNSFLSKDAK.

The transit peptide at 1 to 34 directs the protein to the peroxisome; sequence MEKAIQRQRVLLEHLQPIRHHTHDHSSSLTTSIC. The active-site Acyl-thioester intermediate is the C138. Residues H393 and C425 each act as proton acceptor in the active site. G427 serves as a coordination point for substrate.

The protein belongs to the thiolase-like superfamily. Thiolase family. As to quaternary structure, homodimer.

It is found in the peroxisome. The catalysed reaction is an acyl-CoA + acetyl-CoA = a 3-oxoacyl-CoA + CoA. The protein operates within aromatic compound metabolism. It participates in lipid metabolism; fatty acid metabolism. Component of the floral volatile benzenoid/phenylpropanoid (FVBP) biosynthetic pathway. Thiolase that catalyzes the conversion of 3-oxo-3-phenylpropionyl-CoA (benzoylacetyl-CoA) to benzoyl-CoA. The protein is 3-ketoacyl CoA thiolase 1, peroxisomal of Petunia hybrida (Petunia).